The sequence spans 203 residues: uncharacterized protein (203 aa).

Residues 180 to 200 (VYLLLFGIPLLILIFLIIFFI) form a helical membrane-spanning segment.

Its subcellular location is the virion. The protein localises to the host membrane. This is an uncharacterized protein from Acanthamoeba polyphaga (Amoeba).